Consider the following 166-residue polypeptide: Salivary acidic proline-rich phosphoprotein 1/2 (166 aa).

Positions 1–16 (MLLILLSVALLAFSSA) are cleaved as a signal peptide. Positions 16–166 (AQDLDEDVSQ…QGPPQGQSPQ (151 aa)) are disordered. A Pyrrolidone carboxylic acid modification is found at glutamine 17. An inhibits hydroxyapatite formation, binds to hydroxyapatite and calcium region spans residues 17–46 (QDLDEDVSQEDVPLVISDGGDSEQFIDEER). At serine 24 the chain carries Phosphoserine; by FAM20C. Serine 33 is subject to Phosphoserine; alternate. O-linked (GlcA) serine; alternate glycans are attached at residues serine 33 and serine 38. Residue serine 38 is modified to Phosphoserine; by FAM20C; alternate. Low complexity-rich tracts occupy residues 48 to 61 (GPPL…PSAG) and 68 to 82 (GPQQ…QQQQ). 2 stretches are compositionally biased toward pro residues: residues 83 to 111 (GPPP…PQGP) and 137 to 159 (GPPP…PQGP).

Post-translationally, proteolytically cleaved; PRP-2, PRP-1, PIF-S and Db-S yield PRP-4, PRP-3 (protein A), PIF-F and Db-F, respectively. A hexuronic acid was shown to be linked to Ser-33 in about 40% of the polypeptides. Neither the structure of the carbohydrate (whether glucuronic acid or an isomer of), nor the linkage (whether a glycoside or an ester) has been definitely established.

The protein localises to the secreted. Its function is as follows. PRP's act as highly potent inhibitors of crystal growth of calcium phosphates. They provide a protective and reparative environment for dental enamel which is important for the integrity of the teeth. In Homo sapiens (Human), this protein is Salivary acidic proline-rich phosphoprotein 1/2 (PRH1).